A 323-amino-acid chain; its full sequence is Viral cathepsin (323 aa).

The signal sequence occupies residues 1-16; it reads MNKILFYLFVYGVVNS. A propeptide spans 17-112 (activation peptide); sequence AAYDLLKAPN…IVLDQPPGKG (96 aa). 3 disulfides stabilise this stretch: Cys133–Cys174, Cys167–Cys207, and Cys262–Cys310. Residue Cys136 is part of the active site. Asn158 is a glycosylation site (N-linked (GlcNAc...) asparagine; by host). Active-site residues include His269 and Asn289.

Belongs to the peptidase C1 family. In terms of assembly, interacts with chitinase/CHIA; this interaction maintains VCATH in the host endoplasmic reticulum. Synthesized as an inactive proenzyme and activated by proteolytic removal of the inhibitory propeptide.

The protein resides in the host endoplasmic reticulum. The enzyme catalyses Endopeptidase of broad specificity, hydrolyzing substrates of both cathepsin L and cathepsin B.. Functionally, cysteine protease that plays an essential role in host liquefaction to facilitate horizontal transmission of the virus. Accumulates within infected cells as an inactive proenzyme (proV-CATH), which is activated by proteolytic cleavage upon cell death. The protein is Viral cathepsin (VCATH) of Lepidoptera (butterflies and moths).